The sequence spans 185 residues: Ribosome-recycling factor (185 aa).

Residues Val-128–Glu-158 form a disordered region.

The protein belongs to the RRF family.

The protein resides in the cytoplasm. In terms of biological role, responsible for the release of ribosomes from messenger RNA at the termination of protein biosynthesis. May increase the efficiency of translation by recycling ribosomes from one round of translation to another. The polypeptide is Ribosome-recycling factor (Helicobacter pylori (strain J99 / ATCC 700824) (Campylobacter pylori J99)).